The chain runs to 331 residues: Sucrose operon repressor (331 aa).

The HTH lacI-type domain maps to methionine 1–alanine 56. The H-T-H motif DNA-binding region spans leucine 4–histidine 23.

Functionally, repressor for the csc operon. Binds D-fructose as an inducer. This chain is Sucrose operon repressor (cscR), found in Escherichia coli.